The sequence spans 853 residues: ATP-dependent zinc metalloprotease FtsH (853 aa).

The Cytoplasmic portion of the chain corresponds to Met1–Lys5. A helical membrane pass occupies residues Tyr6 to Phe26. Topologically, residues Ser27–Ser113 are extracellular. Residues Phe114–Phe134 form a helical membrane-spanning segment. Residues Phe135–Gly853 are Cytoplasmic-facing. Residue Gly205 to Thr212 participates in ATP binding. His427 provides a ligand contact to Zn(2+). Glu428 is a catalytic residue. 2 residues coordinate Zn(2+): His431 and Asp503. Basic and acidic residues-rich tracts occupy residues Glu619 to Val632 and Ala639 to Lys648. Residues Glu619 to Gly853 form a disordered region. A compositionally biased stretch (low complexity) spans Pro677 to Gly695. 2 stretches are compositionally biased toward polar residues: residues Thr728–Ser739 and Met770–Pro788. Residues Leu796–Val813 are compositionally biased toward basic and acidic residues.

This sequence in the central section; belongs to the AAA ATPase family. The protein in the C-terminal section; belongs to the peptidase M41 family. In terms of assembly, homohexamer. It depends on Zn(2+) as a cofactor.

It is found in the cell membrane. Its function is as follows. Acts as a processive, ATP-dependent zinc metallopeptidase for both cytoplasmic and membrane proteins. Plays a role in the quality control of integral membrane proteins. The chain is ATP-dependent zinc metalloprotease FtsH from Corynebacterium glutamicum (strain ATCC 13032 / DSM 20300 / JCM 1318 / BCRC 11384 / CCUG 27702 / LMG 3730 / NBRC 12168 / NCIMB 10025 / NRRL B-2784 / 534).